The chain runs to 969 residues: RNA polymerase-associated protein RapA (969 aa).

The Helicase ATP-binding domain occupies 162–339 (EVGQRVAPRV…FARLALLDAD (178 aa)). 175-182 (DEVGLGKT) is a binding site for ATP. Residues 285-288 (DEAH) carry the DEAH box motif. A Helicase C-terminal domain is found at 492–663 (RIEWLITFLK…GFLKNPQAVG (172 aa)).

The protein belongs to the SNF2/RAD54 helicase family. RapA subfamily. In terms of assembly, interacts with the RNAP. Has a higher affinity for the core RNAP than for the holoenzyme. Its ATPase activity is stimulated by binding to RNAP.

Functionally, transcription regulator that activates transcription by stimulating RNA polymerase (RNAP) recycling in case of stress conditions such as supercoiled DNA or high salt concentrations. Probably acts by releasing the RNAP, when it is trapped or immobilized on tightly supercoiled DNA. Does not activate transcription on linear DNA. Probably not involved in DNA repair. In Actinobacillus pleuropneumoniae serotype 5b (strain L20), this protein is RNA polymerase-associated protein RapA.